Here is a 302-residue protein sequence, read N- to C-terminus: 33 kDa chaperonin (302 aa).

2 disulfides stabilise this stretch: Cys-234/Cys-236 and Cys-267/Cys-270.

The protein belongs to the HSP33 family. Post-translationally, under oxidizing conditions two disulfide bonds are formed involving the reactive cysteines. Under reducing conditions zinc is bound to the reactive cysteines and the protein is inactive.

It localises to the cytoplasm. In terms of biological role, redox regulated molecular chaperone. Protects both thermally unfolding and oxidatively damaged proteins from irreversible aggregation. Plays an important role in the bacterial defense system toward oxidative stress. The protein is 33 kDa chaperonin of Neisseria gonorrhoeae (strain NCCP11945).